Here is a 259-residue protein sequence, read N- to C-terminus: Phosphate import ATP-binding protein PstB (259 aa).

Residues 11–254 (AEARNLNFYY…PQDKRTEDYI (244 aa)) enclose the ABC transporter domain. An ATP-binding site is contributed by 43–50 (GPSGCGKS).

Belongs to the ABC transporter superfamily. Phosphate importer (TC 3.A.1.7) family. As to quaternary structure, the complex is composed of two ATP-binding proteins (PstB), two transmembrane proteins (PstC and PstA) and a solute-binding protein (PstS).

The protein localises to the cell inner membrane. The enzyme catalyses phosphate(out) + ATP + H2O = ADP + 2 phosphate(in) + H(+). Functionally, part of the ABC transporter complex PstSACB involved in phosphate import. Responsible for energy coupling to the transport system. In Dechloromonas aromatica (strain RCB), this protein is Phosphate import ATP-binding protein PstB.